Consider the following 252-residue polypeptide: AA9 family lytic polysaccharide monooxygenase B (252 aa).

Positions 1-20 (MVSFTKTFFAIVACALGVQA) are cleaved as a signal peptide. The Cu(2+) site is built by histidine 21 and histidine 106. An intrachain disulfide couples cysteine 72 to cysteine 198. N-linked (GlcNAc...) asparagine glycosylation occurs at asparagine 158. Histidine 184 and glutamine 193 together coordinate O2. A Cu(2+)-binding site is contributed by tyrosine 195. Residue asparagine 237 is glycosylated (N-linked (GlcNAc...) asparagine).

This sequence belongs to the polysaccharide monooxygenase AA9 family. Cu(2+) is required as a cofactor.

It is found in the secreted. The enzyme catalyses [(1-&gt;4)-beta-D-glucosyl]n+m + reduced acceptor + O2 = 4-dehydro-beta-D-glucosyl-[(1-&gt;4)-beta-D-glucosyl]n-1 + [(1-&gt;4)-beta-D-glucosyl]m + acceptor + H2O.. Functionally, lytic polysaccharide monooxygenase (LPMO) that depolymerizes crystalline and amorphous polysaccharides via the oxidation of scissile alpha- or beta-(1-4)-glycosidic bonds, yielding C1 or C4 oxidation products. Catalysis by LPMOs requires the reduction of the active-site copper from Cu(II) to Cu(I) by a reducing agent and H(2)O(2) or O(2) as a cosubstrate. The synergistic activity of LPMO9B with xylanase Xyl10G or cellulase Cel5B shows efficient bioconversion rates of 56 and 174 percent in pretreated kenaf (Hibiscus cannabinus) and oak, respectively. This Gloeophyllum trabeum (strain ATCC 11539 / FP-39264 / Madison 617) (Brown rot fungus) protein is AA9 family lytic polysaccharide monooxygenase B.